We begin with the raw amino-acid sequence, 742 residues long: Phosphoribosylformylglycinamidine synthase subunit PurL (742 aa).

The active site involves histidine 54. ATP contacts are provided by tyrosine 57 and lysine 96. Glutamate 98 is a binding site for Mg(2+). Substrate-binding positions include 99-102 and arginine 121; that span reads SHNH. The active-site Proton acceptor is the histidine 100. Aspartate 122 provides a ligand contact to Mg(2+). Residues glycine 225 and glutamine 245 each contribute to the substrate site. Residue aspartate 273 participates in Mg(2+) binding. Position 317-319 (317-319) interacts with substrate; that stretch reads ESQ. Glycine 537 contacts ATP. Asparagine 538 provides a ligand contact to Mg(2+). Position 540 (serine 540) interacts with substrate.

Belongs to the FGAMS family. In terms of assembly, monomer. Part of the FGAM synthase complex composed of 1 PurL, 1 PurQ and 2 PurS subunits.

Its subcellular location is the cytoplasm. The enzyme catalyses N(2)-formyl-N(1)-(5-phospho-beta-D-ribosyl)glycinamide + L-glutamine + ATP + H2O = 2-formamido-N(1)-(5-O-phospho-beta-D-ribosyl)acetamidine + L-glutamate + ADP + phosphate + H(+). It catalyses the reaction L-glutamine + H2O = L-glutamate + NH4(+). It functions in the pathway purine metabolism; IMP biosynthesis via de novo pathway; 5-amino-1-(5-phospho-D-ribosyl)imidazole from N(2)-formyl-N(1)-(5-phospho-D-ribosyl)glycinamide: step 1/2. Its function is as follows. Part of the phosphoribosylformylglycinamidine synthase complex involved in the purines biosynthetic pathway. Catalyzes the ATP-dependent conversion of formylglycinamide ribonucleotide (FGAR) and glutamine to yield formylglycinamidine ribonucleotide (FGAM) and glutamate. The FGAM synthase complex is composed of three subunits. PurQ produces an ammonia molecule by converting glutamine to glutamate. PurL transfers the ammonia molecule to FGAR to form FGAM in an ATP-dependent manner. PurS interacts with PurQ and PurL and is thought to assist in the transfer of the ammonia molecule from PurQ to PurL. The chain is Phosphoribosylformylglycinamidine synthase subunit PurL from Bacillus subtilis (strain 168).